The sequence spans 631 residues: 1-deoxy-D-xylulose-5-phosphate synthase (631 aa).

Residues His76 and 117 to 119 (AHS) each bind thiamine diphosphate. Asp148 lines the Mg(2+) pocket. Thiamine diphosphate contacts are provided by residues 149–150 (GA), Asn177, Tyr284, and Glu365. A Mg(2+)-binding site is contributed by Asn177.

It belongs to the transketolase family. DXPS subfamily. Homodimer. Mg(2+) is required as a cofactor. The cofactor is thiamine diphosphate.

The catalysed reaction is D-glyceraldehyde 3-phosphate + pyruvate + H(+) = 1-deoxy-D-xylulose 5-phosphate + CO2. It participates in metabolic intermediate biosynthesis; 1-deoxy-D-xylulose 5-phosphate biosynthesis; 1-deoxy-D-xylulose 5-phosphate from D-glyceraldehyde 3-phosphate and pyruvate: step 1/1. Its function is as follows. Catalyzes the acyloin condensation reaction between C atoms 2 and 3 of pyruvate and glyceraldehyde 3-phosphate to yield 1-deoxy-D-xylulose-5-phosphate (DXP). This chain is 1-deoxy-D-xylulose-5-phosphate synthase, found in Methylibium petroleiphilum (strain ATCC BAA-1232 / LMG 22953 / PM1).